The following is a 515-amino-acid chain: Maturase K (515 aa).

This sequence belongs to the intron maturase 2 family. MatK subfamily.

It is found in the plastid. Its subcellular location is the chloroplast. In terms of biological role, usually encoded in the trnK tRNA gene intron. Probably assists in splicing its own and other chloroplast group II introns. This is Maturase K from Pinus banksiana (Jack pine).